A 348-amino-acid polypeptide reads, in one-letter code: Erythronate-4-phosphate dehydrogenase (348 aa).

Substrate contacts are provided by Thr-46 and Thr-67. Position 147 (Asp-147) interacts with NAD(+). Arg-209 is an active-site residue. Asp-233 contributes to the NAD(+) binding site. Glu-238 is an active-site residue. His-255 (proton donor) is an active-site residue. Position 258 (Gly-258) interacts with NAD(+). Tyr-259 is a binding site for substrate.

Belongs to the D-isomer specific 2-hydroxyacid dehydrogenase family. PdxB subfamily. In terms of assembly, homodimer.

Its subcellular location is the cytoplasm. The enzyme catalyses 4-phospho-D-erythronate + NAD(+) = (R)-3-hydroxy-2-oxo-4-phosphooxybutanoate + NADH + H(+). It participates in cofactor biosynthesis; pyridoxine 5'-phosphate biosynthesis; pyridoxine 5'-phosphate from D-erythrose 4-phosphate: step 2/5. Catalyzes the oxidation of erythronate-4-phosphate to 3-hydroxy-2-oxo-4-phosphonooxybutanoate. The polypeptide is Erythronate-4-phosphate dehydrogenase (Bacteroides fragilis (strain YCH46)).